The following is a 567-amino-acid chain: Zinc finger protein 512 (567 aa).

Residues 1–32 are disordered; the sequence is MSSRLGAVPATSGPTTFKQQRSTRIVGAKNSR. Over residues 12-23 the composition is skewed to polar residues; sequence SGPTTFKQQRST. Residues lysine 18 and lysine 84 each participate in a glycyl lysine isopeptide (Lys-Gly) (interchain with G-Cter in SUMO2) cross-link. The interval 86–148 is disordered; sequence AATSHVEGSG…QARRIRKEPP (63 aa). A compositionally biased stretch (basic residues) spans 119–130; the sequence is KKHKLYGRKQRP. The segment at 197–220 adopts a C2H2-type 1 zinc-finger fold; that stretch reads FTCHHCGKQLRSLAGMKYHVMANH. A Glycyl lysine isopeptide (Lys-Gly) (interchain with G-Cter in SUMO2) cross-link involves residue lysine 227. The C2H2-type 2 zinc-finger motif lies at 287–310; it reads LKCHHCGKPYRSKAGLAYHLRSEH. Lysine 333 is covalently cross-linked (Glycyl lysine isopeptide (Lys-Gly) (interchain with G-Cter in SUMO2)). The segment at 406 to 430 adopts a C2H2-type 3; atypical zinc-finger fold; sequence IQCPNQGCEAVYSSVSGLKAHLGSC. Residues 440 to 463 form a C2H2-type 4 zinc finger; sequence YKCLLCQKEFVSESGVKYHINSVH. The disordered stretch occupies residues 486–567; it reads QRQQEEEKRR…PKTNHKRGRK (82 aa). A compositionally biased stretch (basic residues) spans 495-508; the sequence is RQQHRSRRSLRRRQ. Positions 523–532 are enriched in basic and acidic residues; that stretch reads VGKDQRRNNE. The segment covering 556-567 has biased composition (basic residues); the sequence is KPPKTNHKRGRK.

The protein belongs to the krueppel C2H2-type zinc-finger protein family.

Its subcellular location is the nucleus. In terms of biological role, may be involved in transcriptional regulation. This chain is Zinc finger protein 512 (ZNF512), found in Homo sapiens (Human).